Consider the following 85-residue polypeptide: Small ribosomal subunit protein bS20 (85 aa).

The tract at residues 1–22 (MPQIKSAIKRVKTQNATNKRNA) is disordered. A compositionally biased stretch (polar residues) spans 13 to 22 (TQNATNKRNA).

It belongs to the bacterial ribosomal protein bS20 family.

In terms of biological role, binds directly to 16S ribosomal RNA. The sequence is that of Small ribosomal subunit protein bS20 from Lactobacillus acidophilus (strain ATCC 700396 / NCK56 / N2 / NCFM).